Here is a 207-residue protein sequence, read N- to C-terminus: GTP cyclohydrolase 1 (207 aa).

The Zn(2+) site is built by C88, H91, and C162.

This sequence belongs to the GTP cyclohydrolase I family. As to quaternary structure, toroid-shaped homodecamer, composed of two pentamers of five dimers.

The enzyme catalyses GTP + H2O = 7,8-dihydroneopterin 3'-triphosphate + formate + H(+). It participates in cofactor biosynthesis; 7,8-dihydroneopterin triphosphate biosynthesis; 7,8-dihydroneopterin triphosphate from GTP: step 1/1. This Sulfurisphaera tokodaii (strain DSM 16993 / JCM 10545 / NBRC 100140 / 7) (Sulfolobus tokodaii) protein is GTP cyclohydrolase 1.